The sequence spans 282 residues: Deoxyribonuclease-1 (282 aa).

The N-terminal stretch at 1–22 (MRGARLTGALLALAGLLQVALS) is a signal peptide. Asparagine 40 carries N-linked (GlcNAc...) asparagine glycosylation. Residue glutamate 100 is part of the active site. The cysteines at positions 123 and 126 are disulfide-linked. Asparagine 128 is a glycosylation site (N-linked (GlcNAc...) asparagine). Histidine 156 is a catalytic residue. A disulfide bridge connects residues cysteine 195 and cysteine 231.

The protein belongs to the DNase I family. The cofactor is Ca(2+). It depends on Mg(2+) as a cofactor.

It is found in the secreted. The protein resides in the zymogen granule. Its subcellular location is the nucleus envelope. It catalyses the reaction Endonucleolytic cleavage to 5'-phosphodinucleotide and 5'-phosphooligonucleotide end-products.. Its function is as follows. Serum endocuclease secreted into body fluids by a wide variety of exocrine and endocrine organs. Expressed by non-hematopoietic tissues and preferentially cleaves protein-free DNA. Among other functions, seems to be involved in cell death by apoptosis. Binds specifically to G-actin and blocks actin polymerization. Together with DNASE1L3, plays a key role in degrading neutrophil extracellular traps (NETs). NETs are mainly composed of DNA fibers and are released by neutrophils to bind pathogens during inflammation. Degradation of intravascular NETs by DNASE1 and DNASE1L3 is required to prevent formation of clots that obstruct blood vessels and cause organ damage following inflammation. The sequence is that of Deoxyribonuclease-1 (DNASE1) from Equus caballus (Horse).